Consider the following 209-residue polypeptide: C-type lectin domain family 6 member A (209 aa).

Residues 1–20 (MVQERQSQGKGVCWTLRLWS) lie on the Cytoplasmic side of the membrane. A helical; Signal-anchor for type II membrane protein membrane pass occupies residues 21 to 43 (AAVISMLLLSTCFIASCVVTYQF). At 44-209 (IMDQPSRRLY…SICEMKKIYL (166 aa)) the chain is on the extracellular side. Intrachain disulfides connect Cys64/Cys78, Cys79/Cys90, Cys107/Cys202, and Cys176/Cys194. Residues 86–203 (FGSSCYLIST…CDSKHNSICE (118 aa)) form the C-type lectin domain. Ca(2+) contacts are provided by Val116, Asn118, and Glu122. N-linked (GlcNAc...) asparagine glycosylation occurs at Asn131. Residues Glu168, Asn170, and Glu174 each coordinate Ca(2+). Alpha-D-mannopyranose is bound by residues 168–170 (EPN), Glu174, Trp182, and 190–191 (ND). Residues Asn190, Asp191, and Glu203 each contribute to the Ca(2+) site.

In terms of assembly, associated with FCER1G. Heterodimer with CLEC4D; this heterodimer forms a pattern recognition receptor (PRR) against fungal infection. Expressed by the XS52 DC (dendritic cell) line (at protein level). Expressed constitutively by the epidermis, and skin resident DC appear to be the major source of this expression. Expressed in the spleen and thymus. Expression was undetectable in non-DC lines, including macrophage lines (J774 and Raw), T-cell lines (7-17, HDK-1, and D10), B-cell hybridoma (5C5), a keratinocyte line (Pam 212), and a fibroblast line (NS01).

It localises to the cell membrane. In terms of biological role, calcium-dependent lectin that acts as a pattern recognition receptor (PRR) of the innate immune system: specifically recognizes and binds alpha-mannans on C.albicans hypheas. Binding of C.albicans alpha-mannans to this receptor complex leads to phosphorylation of the immunoreceptor tyrosine-based activation motif (ITAM) of FCER1G, triggering activation of SYK, CARD9 and NF-kappa-B, consequently driving maturation of antigen-presenting cells and shaping antigen-specific priming of T-cells toward effector T-helper 1 and T-helper 17 cell subtypes. Also recognizes, in a mannose-dependent manner, allergens from house dust mite and fungi, by promoting cysteinyl leukotriene production. Recognizes soluble elements from the eggs of Shistosoma mansoni altering adaptive immune responses. In Mus musculus (Mouse), this protein is C-type lectin domain family 6 member A.